The chain runs to 533 residues: NADH-quinone oxidoreductase subunit N (533 aa).

14 helical membrane-spanning segments follow: residues 13 to 33 (VWPL…EGFV), 40 to 60 (LVQA…TILV), 87 to 107 (PALF…LLFA), 141 to 161 (HTEV…FAAA), 164 to 184 (LLTL…LSGL), 200 to 220 (FMLG…VYGF), 243 to 263 (LLIG…AVPF), 275 to 295 (PTAV…GAML), 310 to 330 (QPML…IAIV), 337 to 357 (MLAY…LGVQ), 373 to 393 (VLFY…VVTL), 417 to 437 (VAGV…TAGF), 451 to 471 (GAWP…FFYV), and 502 to 522 (ATIF…GPVL).

Belongs to the complex I subunit 2 family. NDH-1 is composed of 14 different subunits. Subunits NuoA, H, J, K, L, M, N constitute the membrane sector of the complex.

The protein resides in the cell membrane. The enzyme catalyses a quinone + NADH + 5 H(+)(in) = a quinol + NAD(+) + 4 H(+)(out). NDH-1 shuttles electrons from NADH, via FMN and iron-sulfur (Fe-S) centers, to quinones in the respiratory chain. The immediate electron acceptor for the enzyme in this species is believed to be a menaquinone. Couples the redox reaction to proton translocation (for every two electrons transferred, four hydrogen ions are translocated across the cytoplasmic membrane), and thus conserves the redox energy in a proton gradient. This chain is NADH-quinone oxidoreductase subunit N, found in Nocardioides sp. (strain ATCC BAA-499 / JS614).